We begin with the raw amino-acid sequence, 361 residues long: tRNA/tmRNA (uracil-C(5))-methyltransferase (361 aa).

S-adenosyl-L-methionine is bound by residues Q185, Y213, N218, E234, and D294. The Nucleophile role is filled by C319. The active-site Proton acceptor is the E353.

Belongs to the class I-like SAM-binding methyltransferase superfamily. RNA M5U methyltransferase family. TrmA subfamily.

The catalysed reaction is uridine(54) in tRNA + S-adenosyl-L-methionine = 5-methyluridine(54) in tRNA + S-adenosyl-L-homocysteine + H(+). It carries out the reaction uridine(341) in tmRNA + S-adenosyl-L-methionine = 5-methyluridine(341) in tmRNA + S-adenosyl-L-homocysteine + H(+). Functionally, dual-specificity methyltransferase that catalyzes the formation of 5-methyluridine at position 54 (m5U54) in all tRNAs, and that of position 341 (m5U341) in tmRNA (transfer-mRNA). The chain is tRNA/tmRNA (uracil-C(5))-methyltransferase from Pseudomonas syringae pv. syringae (strain B728a).